The primary structure comprises 570 residues: MACMAPRGPAAIPHPSSERAGLRRPARCAMAKAVNPRKKALPAPLSIRLYAPGMTPLLRAGAGGLAASLRAILGSASPAAPWPSPVRLGPGTATVEQEAIHLDWGGKAPEATLRALFGASFRVKQGFIDLPGTRPPGAPEPPPELAAALHDALKVTFLQHGKSTQGGARRRVTFEVDARPVIVESQGYDSFVHQTAWQSVLEALEVGSTSLASWAYPGAAERHIGVRVTKVEYTAAEALCACFALVGCVSYKLPQLRGGAFVALAPTNLVRFAELRPGLTPKRLRDVAVAGASDAVLAAQLVMAQEAGKKRLGAVLGTTEAVALRQMPWNAQQKIRGAVVRQDAVLEEVLDRYEAAAAALPHTLRVRKPEGKATGEASYFIAISALRAFITENLAASRPWYADFATATTAEGRFIHDYRDRDNLGALLWHERKGLIAMHPYLGEAEQWLVQSVHLALRSRFKSIYADTKESAPATRSNRLKGERERLRLSFAGAKTPEQVRAALADLWSRAGTNRELQEHWRDILQLLGPERWRAARDLALVALASYQGKGGEAAELEDADEAAGASEQS.

Disordered regions lie at residues 1-23 and 551-570; these read MACMAPRGPAAIPHPSSERAGLR and GGEAAELEDADEAAGASEQS.

The protein belongs to the CRISPR-associated protein Cas8a1/Csx13 family. Myxan subtype subfamily.

In terms of biological role, CRISPR (clustered regularly interspaced short palindromic repeat) is an adaptive immune system that provides protection against mobile genetic elements (viruses, transposable elements and conjugative plasmids). CRISPR clusters contain spacers, sequences complementary to antecedent mobile elements, and target invading nucleic acids. CRISPR clusters are transcribed and processed into CRISPR RNA (crRNA). Its function is as follows. Functions in an unknown fashion to stimulate transcription of fruA independently of the intracellular A- and E-developmental signals. The sequence is that of CRISPR-associated protein Cas8a1/Csx13 (devT) from Myxococcus xanthus (strain DK1622).